We begin with the raw amino-acid sequence, 507 residues long: ATP synthase subunit alpha, chloroplastic (507 aa).

170–177 (GDRQTGKT) contributes to the ATP binding site.

Belongs to the ATPase alpha/beta chains family. F-type ATPases have 2 components, CF(1) - the catalytic core - and CF(0) - the membrane proton channel. CF(1) has five subunits: alpha(3), beta(3), gamma(1), delta(1), epsilon(1). CF(0) has four main subunits: a, b, b' and c.

Its subcellular location is the plastid. It localises to the chloroplast thylakoid membrane. The enzyme catalyses ATP + H2O + 4 H(+)(in) = ADP + phosphate + 5 H(+)(out). In terms of biological role, produces ATP from ADP in the presence of a proton gradient across the membrane. The alpha chain is a regulatory subunit. The protein is ATP synthase subunit alpha, chloroplastic of Nandina domestica (Heavenly bamboo).